The chain runs to 87 residues: Large ribosomal subunit protein bL31B (87 aa).

It belongs to the bacterial ribosomal protein bL31 family. Type B subfamily. Part of the 50S ribosomal subunit.

This is Large ribosomal subunit protein bL31B from Burkholderia pseudomallei (strain 1106a).